The following is a 220-amino-acid chain: Putative GED domain-containing protein DNM1P46 (220 aa).

Residues 18 to 46 (VSVETRNVKPQGKDSKAEENGSHSFMHSM) are disordered. Over residues 28–38 (QGKDSKAEENG) the composition is skewed to basic and acidic residues. Residues 54–149 (METTQNLVDS…CCPTCTRLGT (96 aa)) enclose the GED domain. The disordered stretch occupies residues 173–194 (DTPGGVGRAGTAARRDSRGNEK). Over residues 185–194 (ARRDSRGNEK) the composition is skewed to basic and acidic residues.

This Homo sapiens (Human) protein is Putative GED domain-containing protein DNM1P46 (DNM1P46).